Here is a 379-residue protein sequence, read N- to C-terminus: MGKYIRPLSDAVFTIASDDLWIESLAIQQLHTTANLPNMQRVVGMPDLHPGRGYPIGAAFFSVGRFYPALVGNDIGCGMALWQTDILARKYNADKFEKRLSDLDDVAEESWLEENLPSAFAQHPWRNSLGSIGGGNHFVELQQIDQIIDAELFALAGLDAQHLQLLVHSGSRGLGQSILQRHIASFSHHGLPEGSDDALRYIAEHDDALAFARINRQLIALRIMQQVKATGSPVLDVAHNFVSACQIGDQQGWLHRKGATPDDNGLVIIPGSRGDYSWLVKPVANEKTLHSLAHGAGRKWGRTECKGRLAAKYTATQLSRTELGSRVICRDKQLIFEEAPQAYKSAESVVQCLVLAGLIIPVARLRPVLTLKNSGGKKG.

D74, C77, H137, H168, and H239 together coordinate Mn(2+). Position 136–140 (136–140 (NHFVE)) interacts with GMP. GMP is bound by residues 239–240 (HN), S277, 294–297 (HGAG), and K372. Catalysis depends on H294, which acts as the GMP-histidine intermediate.

The protein belongs to the RtcB family. RtcB2 subfamily. Mn(2+) is required as a cofactor.

The enzyme catalyses a 3'-end 3'-phospho-ribonucleotide-RNA + a 5'-end dephospho-ribonucleoside-RNA + GTP = a ribonucleotidyl-ribonucleotide-RNA + GMP + diphosphate. Its function is as follows. GTP-dependent RNA ligase involved in rRNA repair. Repairs damaged 16S rRNA in 30S subunits that has been cleaved between adenine-1493 and guanosine-1494 (E.coli nubering). This specific cleavage is inflicted by CdiA (ECL_04451) or by colicin E3-type (ColE3) proteins. Poorly repairs damaged rRNA in the 70S ribosome; addition of release factor PrfH improves repair about 3-fold in vitro, probably because PrfH hydrolyzes the nascent chain allowing ribosomal subunit dissociation. In vivo the PrfH-RtcB2 pair restores growth in the presence of ribotoxins that specifically create this damage. Does not repair damaged tRNA (tested with tRNA(Asp) and tRNA(Arg)). This chain is RNA-splicing ligase RtcB2, found in Escherichia coli (strain ATCC 25922 / DSM 1103 / LMG 8223 / NCIMB 12210 / NCTC 12241 / WDCM 00013 / Seattle 1946).